The sequence spans 96 residues: uncharacterized protein (96 aa).

The segment at 35–96 (SPSGEKRSTK…KKFSSPPHPK (62 aa)) is disordered. Basic and acidic residues predominate over residues 38–52 (GEKRSTKNQTKENTK). Residues 69-80 (ANQQTNENSKPL) show a composition bias toward polar residues.

This is an uncharacterized protein from Dictyostelium discoideum (Social amoeba).